Reading from the N-terminus, the 63-residue chain is Omega-conotoxin Eu1.6 (63 aa).

A signal peptide spans 1–21 (MGMRMMFTVFLLVVLATTVVS). The propeptide occupies 22–47 (FTSDRAPDGRNAAAKAFGLITPTVRK). Disulfide bonds link Cys-49/Cys-55 and Cys-50/Cys-63. Residues 51 to 53 (SNP) form a ser-Xaa-Pro motif, crucial for potent interaction with nAChR region.

This sequence belongs to the conotoxin A superfamily. In terms of tissue distribution, expressed by the venom duct.

Its subcellular location is the secreted. Its function is as follows. This amidated peptide potently and teversibly inhibits Cav2.2/CACNA1B. Steady-state inactivation is enhanced at hyperpolarized membrane potentials. Also shows a weak interaction at alpha-3-beta-4/ CHRNA3-CHRNB4 and alpha-7/CHRNA7 nAChRs subtypes. In vivo, exhibits a potent analgesic activity in rat partial sciatic nerve injury and chronic constriction injury models. The protein is Omega-conotoxin Eu1.6 of Conus eburneus (Ivory cone).